The following is an 853-amino-acid chain: cGMP-dependent protein kinase (853 aa).

The tract at residues 1-29 is autoinhibitory segment; the sequence is MEEDDNLKKGNERNKKKAIFSNDDFTGED. 4 cNMP-binding domain regions span residues 58-173, 176-275, 295-398, and 418-517; these read VCST…FIDS, VFDM…IVLG, IFKQ…LGNN, and IFRY…LQII. K113, G122, E123, A125, R132, and S133 together coordinate 3',5'-cyclic GMP. 6 residues coordinate 3',5'-cyclic GMP: R473, G482, E483, A485, R492, and T493. One can recognise a Protein kinase domain in the interval 541 to 798; sequence LETERIIGRG…FKDIKDHPFF (258 aa). ATP is bound by residues 547–555 and K570; that span reads IGRGTFGTV. Residue D664 is the Proton acceptor of the active site. In terms of domain architecture, AGC-kinase C-terminal spans 799–853; the sequence is SNFNWDKLAGRLLDPPLVSKSETYAEDIDIKQIEEEDAEDDEEPLNDEDNWDIDF. The disordered stretch occupies residues 827 to 853; sequence DIKQIEEEDAEDDEEPLNDEDNWDIDF. Acidic residues predominate over residues 832-853; that stretch reads EEEDAEDDEEPLNDEDNWDIDF.

The protein belongs to the protein kinase superfamily. AGC Ser/Thr protein kinase family. cGMP subfamily. In terms of assembly, monomer. Mg(2+) serves as cofactor. Post-translationally, autophosphorylated.

The protein localises to the cytoplasm. It localises to the endoplasmic reticulum membrane. It carries out the reaction L-seryl-[protein] + ATP = O-phospho-L-seryl-[protein] + ADP + H(+). The enzyme catalyses L-threonyl-[protein] + ATP = O-phospho-L-threonyl-[protein] + ADP + H(+). With respect to regulation, activated by cGMP. Not activated by cAMP. cGMP binding allosterically triggers a conformational change at the alpha C-helix of cGMP-binding domain 4, which bridges the regulatory and catalytic domains, causing the capping triad, composed of Arg-484, Gln-532 and Asp-533, to form and stabilize the active conformation. The cGMP-binding domains acts cooperatively to activate PKG. In terms of biological role, serine/threonine protein kinase which acts as a downstream effector of the second messenger cGMP. Controls the release of Ca(2+) from intracellular stores by regulating phosphoinositide biosynthesis. Ca(2+) signals are essential for merozoite and sporozoite invasion and egress from host hepatocytes and erythrocytes, and, in the mosquito vector, for gametocyte activation, and ookinete and sporozoite motility. During the host liver stage, regulates the initial invasion of host hepatocytes by sporozoites by regulating sporozoite motility and microneme exocytosis. Following parasite development in the hepatocytes, required for the release of merosomes, a vesicle containing the mature merozoites. During the asexual blood stage, required for the progression from schizont to the ring stage following merozoite invasion of host erythrocytes and for merozoite egress. Regulates merozoite egress by promoting the release of exonemes and micronemes which contain proteins essential for egress. Phosphorylates CDPK1 predominantly at the late schizont stage; phosphorylation at 'Ser-64' regulates CDPK1 protein-protein interaction and phosphorylation at 'Thr-231' may regulate CDPK1 kinase activity. In the mosquito vector, required for the initiation of gametogenesis induced by xanthurenic acid, specifically the gametocyte differentiation from the crescent-shaped form to the spherical form. Required for the gliding motility of ookinetes to reach and penetrate the midgut epithelium by promoting Ca(2+)-mediated activation of CDPK1 and CDPK4. Also required for microneme secretion in ookinete by promoting Ca(2+)-mediated activation of CDPK3. In Plasmodium falciparum (isolate NF54), this protein is cGMP-dependent protein kinase.